Reading from the N-terminus, the 69-residue chain is Sec-independent protein translocase protein TatA (69 aa).

Residues M1–G21 form a helical membrane-spanning segment. The segment covering E47 to A63 has biased composition (basic and acidic residues). The segment at E47–S69 is disordered.

It belongs to the TatA/E family. As to quaternary structure, forms a complex with TatC.

The protein localises to the cell inner membrane. Part of the twin-arginine translocation (Tat) system that transports large folded proteins containing a characteristic twin-arginine motif in their signal peptide across membranes. TatA could form the protein-conducting channel of the Tat system. The sequence is that of Sec-independent protein translocase protein TatA from Chlorobium chlorochromatii (strain CaD3).